The chain runs to 945 residues: Netrin receptor UNC5B (945 aa).

The N-terminal stretch at 1 to 26 (MRARSGARGALLLALLLCWDPTPSLA) is a signal peptide. The Extracellular portion of the chain corresponds to 27–377 (GIDSGGQALP…LEPSGDVALY (351 aa)). The 98-residue stretch at 48–145 (PHFLLEPEDA…SGTTKSRRAY (98 aa)) folds into the Ig-like domain. 9 disulfides stabilise this stretch: Cys-69-Cys-130, Cys-81-Cys-128, Cys-174-Cys-225, Cys-258-Cys-295, Cys-262-Cys-299, Cys-273-Cys-285, Cys-314-Cys-348, Cys-318-Cys-353, and Cys-326-Cys-338. Residues 153–242 (KNFDQEPLAK…KRRSTTATVI (90 aa)) enclose the Ig-like C2-type domain. Asn-222 is a glycosylation site (N-linked (GlcNAc...) asparagine). 2 consecutive TSP type-1 domains span residues 246-300 (NGGW…TVCP) and 302-354 (DGAW…GLCV). N-linked (GlcNAc...) asparagine glycosylation is present at Asn-347. Residues 378-398 (AGLVVAVFVVLAVLMAVGVIV) traverse the membrane as a helical segment. Over 399–945 (YRRNCRDFDT…LVAMTTDGDC (547 aa)) the chain is Cytoplasmic. Cys-403 carries the S-palmitoyl cysteine lipid modification. Residues 543-686 (SSVSGTFGCL…LGTYVFTGES (144 aa)) enclose the ZU5 domain. At Tyr-581 the chain carries Phosphotyrosine. The segment at 689 to 838 (RSAVKRLQLA…AETPAGSLDA (150 aa)) is UPA domain. The interaction with DCC stretch occupies residues 707 to 725 (SLEYSLRVYCLEDTPAALK). One can recognise a Death domain in the interval 865–943 (KICNSLDAPN…EMLVAMTTDG (79 aa)).

Belongs to the unc-5 family. In terms of assembly, interacts with the cytoplasmic part of DCC. Interacts with GNAI2 via its cytoplasmic part. Interacts (via death domain) with DAPK1 (via death domain). Interacts (via extracellular domain) with FLRT3 (via extracellular domain); the interaction is direct. Interacts (via extracellular domain) with FLRT2 and FLRT3 (via extracellular domain), but has higher affinity for FLRT3. Identified in a complex with FLRT3 and ADGRL3; does not interact with ADGRL3 by itself. Phosphorylated on cytoplasmic tyrosine residues. Post-translationally, proteolytically cleaved by caspases during apoptosis. The cleavage does not take place when the receptor is associated with netrin ligand. Its cleavage by caspases is required to induce apoptosis. In terms of processing, palmitoylation is required for pro-apoptotic activity, but not for location at lipid rafts. Mainly expressed in regions of differentiating neurons. Expressed in the developing sensory ganglia that flank the spinal cord from E12, peaking at E14. Expressed in the roof plate region of the spinal cord from E14.

Its subcellular location is the cell membrane. The protein localises to the membrane raft. Receptor for netrin required for axon guidance. Mediates axon repulsion of neuronal growth cones in the developing nervous system upon ligand binding. Axon repulsion in growth cones may be caused by its association with DCC that may trigger signaling for repulsion. Functions as a netrin receptor that negatively regulates vascular branching during angiogenesis. Mediates retraction of tip cell filopodia on endothelial growth cones in response to netrin. It also acts as a dependence receptor required for apoptosis induction when not associated with netrin ligand. Mediates apoptosis by activating DAPK1. In the absence of NTN1, activates DAPK1 by reducing its autoinhibitory phosphorylation at Ser-308 thereby increasing its catalytic activity. In Rattus norvegicus (Rat), this protein is Netrin receptor UNC5B (Unc5b).